A 299-amino-acid chain; its full sequence is Nicotinate-nucleotide pyrophosphorylase [carboxylating] (299 aa).

The interval 8–12 (HLLPP) is important for hexamer formation. Quinolinate-binding positions include arginine 102, 138–139 (RK), 160–161 (HR), lysine 171, glutamate 201, aspartate 222, 248–250 (SGG), and glycine 270. Residue threonine 291 is modified to Phosphothreonine.

It belongs to the NadC/ModD family. Hexamer formed by 3 homodimers.

The enzyme catalyses nicotinate beta-D-ribonucleotide + CO2 + diphosphate = quinolinate + 5-phospho-alpha-D-ribose 1-diphosphate + 2 H(+). Its pathway is cofactor biosynthesis; NAD(+) biosynthesis; nicotinate D-ribonucleotide from quinolinate: step 1/1. In terms of biological role, involved in the catabolism of quinolinic acid (QA). The polypeptide is Nicotinate-nucleotide pyrophosphorylase [carboxylating] (QPRT) (Bos taurus (Bovine)).